Reading from the N-terminus, the 214-residue chain is Orotidine 5'-phosphate decarboxylase (214 aa).

Substrate contacts are provided by residues Asp11, Lys33, 59–68, Ser114, 164–174, Gly187, and Arg188; these read DFKIADIPNT and PGIGSQGGRAS. The active-site Proton donor is the Lys61.

It belongs to the OMP decarboxylase family. Type 1 subfamily. In terms of assembly, homodimer.

The enzyme catalyses orotidine 5'-phosphate + H(+) = UMP + CO2. The protein operates within pyrimidine metabolism; UMP biosynthesis via de novo pathway; UMP from orotate: step 2/2. Functionally, catalyzes the decarboxylation of orotidine 5'-monophosphate (OMP) to uridine 5'-monophosphate (UMP). This is Orotidine 5'-phosphate decarboxylase from Thermoplasma acidophilum (strain ATCC 25905 / DSM 1728 / JCM 9062 / NBRC 15155 / AMRC-C165).